A 380-amino-acid polypeptide reads, in one-letter code: SAM and SH3 domain-containing protein 3 (380 aa).

Positions 1–76 (MLRRKPSNAS…KSGKKLGKKW (76 aa)) are disordered. Residues 22 to 41 (LQRSSSFKDFAKSKPSSPVV) are compositionally biased toward low complexity. Phosphoserine occurs at positions 27, 34, and 42. Residue threonine 61 is modified to Phosphothreonine. Serine 97 is modified (phosphoserine). Disordered stretches follow at residues 98–174 (EEMA…TGPF), 237–256 (VGHA…KPKT), and 318–380 (TGSE…AGAP). Threonine 103 carries the post-translational modification Phosphothreonine. A Phosphoserine modification is found at serine 110. The residue at position 112 (threonine 112) is a Phosphothreonine. Serine 113 carries the post-translational modification Phosphoserine. Phosphotyrosine is present on tyrosine 116. Position 120 is a phosphoserine (serine 120). Positions 143 to 152 (RQASTGSELC) are enriched in polar residues. A compositionally biased stretch (low complexity) spans 153–164 (SPSPGSGSFGEE). The SH3 domain occupies 173–234 (PFCGRARVHT…KFIYVDVLPE (62 aa)). Residues 241-255 (RPSRRQSKGKRPKPK) are compositionally biased toward basic residues. Residues 252-316 (PKPKTLHELL…LTAAELLLDY (65 aa)) enclose the SAM domain. Threonine 318 is subject to Phosphothreonine. A compositionally biased stretch (acidic residues) spans 318-327 (TGSEEAEEGA). Serine 320 carries the phosphoserine modification.

Functionally, may function as a signaling adapter protein in lymphocytes. This Homo sapiens (Human) protein is SAM and SH3 domain-containing protein 3 (SASH3).